We begin with the raw amino-acid sequence, 519 residues long: 2-isopropylmalate synthase (519 aa).

The region spanning 5-267 (VKIFDTTLRD…NTNIRSHEIS (263 aa)) is the Pyruvate carboxyltransferase domain. Mn(2+)-binding residues include aspartate 14, histidine 202, histidine 204, and asparagine 238. The interval 392–519 (KLLYLQASSG…KKQQTQTAGV (128 aa)) is regulatory domain.

It belongs to the alpha-IPM synthase/homocitrate synthase family. LeuA type 1 subfamily. As to quaternary structure, homodimer. Mn(2+) is required as a cofactor.

Its subcellular location is the cytoplasm. It carries out the reaction 3-methyl-2-oxobutanoate + acetyl-CoA + H2O = (2S)-2-isopropylmalate + CoA + H(+). Its pathway is amino-acid biosynthesis; L-leucine biosynthesis; L-leucine from 3-methyl-2-oxobutanoate: step 1/4. Catalyzes the condensation of the acetyl group of acetyl-CoA with 3-methyl-2-oxobutanoate (2-ketoisovalerate) to form 3-carboxy-3-hydroxy-4-methylpentanoate (2-isopropylmalate). In Pseudoalteromonas atlantica (strain T6c / ATCC BAA-1087), this protein is 2-isopropylmalate synthase.